A 529-amino-acid chain; its full sequence is Nuclear protein localization protein 4 homolog 1 (529 aa).

Residues 129–266 enclose the MPN domain; it reads IQIENQELVN…ITEYSMDRHY (138 aa). A RanBP2-type zinc finger spans residues 499–529; that stretch reads SGGAVWNCGHCTFQNEAARQDCSMCGLPAAD.

Belongs to the NPL4 family. Forms a complex composed of ubxn-3, ufd-1, npl-4.1 and cdc-48.1; within the complex, interacts with ufd-1 and ubxn-3. Interacts with ufd-1. Interacts with elc-1/elongin C; the interaction may mediate the interaction between the npl-4-ufd-1-cdc-48 complex and the E3 ubiquitin ligase cul-2 complex.

Its subcellular location is the cytoplasm. The protein localises to the nucleus. In association with ufd-1 and ATPase cdc-48.1 and/or cdc-48.2, involved in the cytoplasmic elimination of misfolded proteins exported from the ER. This pathway, known as ERAD, prevents the activation of the unfolded protein response (UPR) caused by the accumulation of misfolded proteins in the ER. During S phase and in association with ufd-1, cdc-48.1 and/or cdc-48.2 and ubxn-3, ensures the degradation of DNA licensing factor cdt-1 after the initiation of DNA replication and thus the disassembly of the DNA replication CGM helicase complex by promoting the dissociation from chromatin of several of its components including cdc-45 and sld-5. Regulates ubxn-3 nuclear localization during S phase. The chain is Nuclear protein localization protein 4 homolog 1 from Caenorhabditis elegans.